We begin with the raw amino-acid sequence, 393 residues long: Phospho-N-acetylmuramoyl-pentapeptide-transferase (393 aa).

The next 10 helical transmembrane spans lie at 29 to 49, 75 to 95, 101 to 121, 138 to 158, 194 to 214, 226 to 246, 263 to 283, 290 to 310, 315 to 335, and 370 to 390; these read RAVM…PWVI, TPTM…LLWF, FVWV…VDDW, YLWQ…SVSE, VSYP…IVGA, GLAI…AYVT, AGEL…FLWF, VFMG…IAVI, IVLG…MAQV, and QVVV…LSTL.

The protein belongs to the glycosyltransferase 4 family. MraY subfamily. Mg(2+) is required as a cofactor.

The protein resides in the cell inner membrane. It catalyses the reaction UDP-N-acetyl-alpha-D-muramoyl-L-alanyl-gamma-D-glutamyl-meso-2,6-diaminopimeloyl-D-alanyl-D-alanine + di-trans,octa-cis-undecaprenyl phosphate = di-trans,octa-cis-undecaprenyl diphospho-N-acetyl-alpha-D-muramoyl-L-alanyl-D-glutamyl-meso-2,6-diaminopimeloyl-D-alanyl-D-alanine + UMP. The protein operates within cell wall biogenesis; peptidoglycan biosynthesis. In terms of biological role, catalyzes the initial step of the lipid cycle reactions in the biosynthesis of the cell wall peptidoglycan: transfers peptidoglycan precursor phospho-MurNAc-pentapeptide from UDP-MurNAc-pentapeptide onto the lipid carrier undecaprenyl phosphate, yielding undecaprenyl-pyrophosphoryl-MurNAc-pentapeptide, known as lipid I. The protein is Phospho-N-acetylmuramoyl-pentapeptide-transferase of Leptothrix cholodnii (strain ATCC 51168 / LMG 8142 / SP-6) (Leptothrix discophora (strain SP-6)).